A 594-amino-acid chain; its full sequence is Probable methylenetetrahydrofolate reductase (NADH) (594 aa).

The Proton donor/acceptor role is filled by Glu21. NAD(+)-binding positions include 21–26 and 52–53; these read EYFPPK and TW. Residues 52 to 53, His81, 111 to 113, Tyr153, 157 to 160, Asp175, and Lys182 contribute to the FAD site; these read TW, RGD, and HPDA. Residue Asp113 coordinates substrate. 2 residues coordinate substrate: Gln193 and Tyr285.

This sequence belongs to the methylenetetrahydrofolate reductase family. As to quaternary structure, homodimer. Requires FAD as cofactor.

The enzyme catalyses (6S)-5-methyl-5,6,7,8-tetrahydrofolate + NAD(+) = (6R)-5,10-methylene-5,6,7,8-tetrahydrofolate + NADH + H(+). The protein operates within one-carbon metabolism; tetrahydrofolate interconversion. Its activity is regulated as follows. Plant MTHFRs strongly prefer NADH over NADPH. Not inhibited by methionine or S-adenosylmethionine. Functionally, the probable reversibility of the MTHFR reaction in plants suggests that they can metabolize the methyl group of 5,10-methylenetetrahydrofolate to serine, sugars and starch. The polypeptide is Probable methylenetetrahydrofolate reductase (NADH) (Oryza sativa subsp. japonica (Rice)).